Reading from the N-terminus, the 63-residue chain is Bowman-Birk type proteinase inhibitor B-II (63 aa).

7 disulfide bridges follow: Cys-5–Cys-62, Cys-6–Cys-23, Cys-9–Cys-57, Cys-11–Cys-21, Cys-30–Cys-37, Cys-34–Cys-49, and Cys-39–Cys-47.

This sequence belongs to the Bowman-Birk serine protease inhibitor family.

In Arachis hypogaea (Peanut), this protein is Bowman-Birk type proteinase inhibitor B-II.